Here is a 505-residue protein sequence, read N- to C-terminus: Deoxyguanosinetriphosphate triphosphohydrolase (505 aa).

The HD domain occupies Arg66–Cys273.

The protein belongs to the dGTPase family. Type 1 subfamily. As to quaternary structure, homotetramer. Requires Mg(2+) as cofactor.

The catalysed reaction is dGTP + H2O = 2'-deoxyguanosine + triphosphate + H(+). In terms of biological role, dGTPase preferentially hydrolyzes dGTP over the other canonical NTPs. The protein is Deoxyguanosinetriphosphate triphosphohydrolase of Escherichia fergusonii (strain ATCC 35469 / DSM 13698 / CCUG 18766 / IAM 14443 / JCM 21226 / LMG 7866 / NBRC 102419 / NCTC 12128 / CDC 0568-73).